The primary structure comprises 102 residues: Small ribosomal subunit protein uS10 (102 aa).

The protein belongs to the universal ribosomal protein uS10 family. In terms of assembly, part of the 30S ribosomal subunit.

Functionally, involved in the binding of tRNA to the ribosomes. This chain is Small ribosomal subunit protein uS10, found in Bartonella tribocorum (strain CIP 105476 / IBS 506).